A 247-amino-acid polypeptide reads, in one-letter code: ATP synthase subunit a, chloroplastic (247 aa).

Transmembrane regions (helical) follow at residues 38 to 58 (QVLI…ILVV), 95 to 115 (VPFI…GALL), 134 to 154 (INTT…AGIS), 199 to 219 (LVVV…VMFL), and 220 to 240 (GLFT…AYIG).

This sequence belongs to the ATPase A chain family. As to quaternary structure, F-type ATPases have 2 components, CF(1) - the catalytic core - and CF(0) - the membrane proton channel. CF(1) has five subunits: alpha(3), beta(3), gamma(1), delta(1), epsilon(1). CF(0) has four main subunits: a, b, b' and c.

The protein resides in the plastid. Its subcellular location is the chloroplast thylakoid membrane. Functionally, key component of the proton channel; it plays a direct role in the translocation of protons across the membrane. The protein is ATP synthase subunit a, chloroplastic of Pisum sativum (Garden pea).